The primary structure comprises 642 residues: MSKSKGKGSSDNVMVMVRVRPFNKREEQEGATEIIEMDKTLCTVTLHKPVEKGAGSATSECLPSKKVFTYDAVYPSNSTQVEVFDESVREMIDGCLEGYNATVFAYGQTGSGKTHTMMGQKDNPGMIPLAFQRIFDFIAQAKDDQFLVRASFVEIYNEDLKDLLTGATHLQLKEDPVKGVFIKDLSEHPVSDERHIDKLIQKGNESRAVAATLMNATSSRSHSIFQVVLERMTVIDGRECIRVGKLNLVDLAGSERQEKTGATGDRLKEAAKINLSLTTLGCVISKLVEGSKHIPYRDSKLTRLLQDSLGGNSKTLMVVAVSPASTNYDETMSTLRYADRAKQIKNKPRINEDPKDAQIREMRNYVTKLEAQLAEIMQQANAGSGSEVEDKEAYDGEGNMGAGFTGYTADEMANVQSLRKNLDKTKKKRVKYVEQRKENEEAVSAEELATLEEEQKKLEEQIKESERKAKERQLMAKKIAALIEANKSKMVDKKVLENEERLKDAAIREARNALVAQKKEAERLKKELIEAEQQRKQLEEQCTTALDQAQQLELRLNEYKEQLAERREELHNVEADQAKEREIIRNDYADQIKLCELRQFIVSMFVPEEYQRSIESIASWDEDNQAWHFRTQKSHRGMAGFG.

A Kinesin motor domain is found at 12–344 (NVMVMVRVRP…LRYADRAKQI (333 aa)). 107-114 (GQTGSGKT) is an ATP binding site. 4 residues coordinate ADP: G110, G112, K113, and T114. T114 contacts Mg(2+). Residues 415–475 (VQSLRKNLDK…ERKAKERQLM (61 aa)) are a coiled coil.

Belongs to the TRAFAC class myosin-kinesin ATPase superfamily. Kinesin family. Kinesin II subfamily.

It is found in the cell projection. Its subcellular location is the cilium. The protein localises to the flagellum. The protein resides in the cytoplasm. It localises to the cytoskeleton. It is found in the flagellum axoneme. Its subcellular location is the flagellum basal body. In terms of biological role, involved in anterograde intraflagellar transport (IFT). Involved in flagellar assembly. The polypeptide is Kinesin-2b (Giardia intestinalis (strain ATCC 50803 / WB clone C6) (Giardia lamblia)).